The sequence spans 74 residues: Acyl carrier protein (74 aa).

In terms of domain architecture, Carrier spans 1–73 (MAVFEKVQEI…DLVAYVEEKT (73 aa)). At Ser35 the chain carries O-(pantetheine 4'-phosphoryl)serine.

The protein belongs to the acyl carrier protein (ACP) family. 4'-phosphopantetheine is transferred from CoA to a specific serine of apo-ACP by AcpS. This modification is essential for activity because fatty acids are bound in thioester linkage to the sulfhydryl of the prosthetic group.

Its subcellular location is the cytoplasm. It participates in lipid metabolism; fatty acid biosynthesis. Carrier of the growing fatty acid chain in fatty acid biosynthesis. The polypeptide is Acyl carrier protein (Streptococcus thermophilus (strain CNRZ 1066)).